The sequence spans 172 residues: Nucleoside-triphosphatase THEP1 (172 aa).

Residues Gly11–Thr18 and Ile101–Gly108 each bind ATP.

The protein belongs to the THEP1 NTPase family.

The catalysed reaction is a ribonucleoside 5'-triphosphate + H2O = a ribonucleoside 5'-diphosphate + phosphate + H(+). Its function is as follows. Has nucleotide phosphatase activity towards ATP, GTP, CTP, TTP and UTP. May hydrolyze nucleoside diphosphates with lower efficiency. The chain is Nucleoside-triphosphatase THEP1 from Sulfolobus acidocaldarius (strain ATCC 33909 / DSM 639 / JCM 8929 / NBRC 15157 / NCIMB 11770).